The chain runs to 262 residues: Zinc import ATP-binding protein ZnuC (262 aa).

One can recognise an ABC transporter domain in the interval 5-220 (IELQDICVDF…PSYLAMFGHR (216 aa)). 37–44 (GPNGAGKS) is a binding site for ATP.

Belongs to the ABC transporter superfamily. Zinc importer (TC 3.A.1.15.5) family. As to quaternary structure, the complex is composed of two ATP-binding proteins (ZnuC), two transmembrane proteins (ZnuB) and a solute-binding protein (ZnuA).

Its subcellular location is the cell inner membrane. The catalysed reaction is Zn(2+)(out) + ATP(in) + H2O(in) = Zn(2+)(in) + ADP(in) + phosphate(in) + H(+)(in). Functionally, part of the ABC transporter complex ZnuABC involved in zinc import. Responsible for energy coupling to the transport system. This is Zinc import ATP-binding protein ZnuC from Vibrio cholerae serotype O1 (strain ATCC 39315 / El Tor Inaba N16961).